The sequence spans 378 residues: H repeat-associated putative transposase YhhI (378 aa).

Belongs to the transposase 11 family.

The chain is H repeat-associated putative transposase YhhI (yhhI) from Escherichia coli (strain K12).